The chain runs to 304 residues: WW domain-binding protein 1 (304 aa).

Positions 1 to 26 (MARASSRNSSEEAWGSLQAPQQQQSP) are disordered. 2 consecutive short sequence motifs (PPxY motif) follow at residues 159–162 (PPAY) and 172–176 (PPPPY). Disordered stretches follow at residues 206 to 235 (TNVE…VHIP) and 252 to 304 (CPCP…GDIP). Residues 209-218 (EGVSSQQSAL) show a composition bias toward polar residues.

Binds to the WW domain of YAP1, WWP1 and WWP2. Interacts with WWOX. Interacts with NEDD4.

The protein is WW domain-binding protein 1 (Wbp1) of Mus musculus (Mouse).